Reading from the N-terminus, the 457-residue chain is Allantoinase (457 aa).

Positions 58, 60, 145, 181, 237, and 310 each coordinate Zn(2+). At lysine 145 the chain carries N6-carboxylysine.

It belongs to the metallo-dependent hydrolases superfamily. Allantoinase family. Homotetramer. Zn(2+) serves as cofactor. Post-translationally, carboxylation allows a single lysine to coordinate two zinc ions.

The catalysed reaction is (S)-allantoin + H2O = allantoate + H(+). Its pathway is nitrogen metabolism; (S)-allantoin degradation; allantoate from (S)-allantoin: step 1/1. Catalyzes the conversion of allantoin (5-ureidohydantoin) to allantoic acid by hydrolytic cleavage of the five-member hydantoin ring. This chain is Allantoinase, found in Solibacter usitatus (strain Ellin6076).